We begin with the raw amino-acid sequence, 516 residues long: Cytochrome P450 1A1 (516 aa).

The segment at 25–36 (FRPQVPKGLKSP) is mitochondrial targeting signal. O-linked (GlcNAc) serine glycosylation is present at S63. F220 provides a ligand contact to substrate. C453 serves as a coordination point for heme.

The protein belongs to the cytochrome P450 family. In terms of assembly, interacts with cytosolic chaperones HSP70 and HSP90; this interaction is required for initial targeting to mitochondria. Interacts (via mitochondrial targeting signal) with TOMM40 (via N-terminus); this interaction is required for translocation across the mitochondrial outer membrane. It depends on heme as a cofactor. As to expression, constitutively expressed in liver.

The protein localises to the endoplasmic reticulum membrane. The protein resides in the mitochondrion inner membrane. Its subcellular location is the microsome membrane. It localises to the cytoplasm. The catalysed reaction is an organic molecule + reduced [NADPH--hemoprotein reductase] + O2 = an alcohol + oxidized [NADPH--hemoprotein reductase] + H2O + H(+). The enzyme catalyses estrone + reduced [NADPH--hemoprotein reductase] + O2 = 2-hydroxyestrone + oxidized [NADPH--hemoprotein reductase] + H2O + H(+). It carries out the reaction estrone + reduced [NADPH--hemoprotein reductase] + O2 = 4-hydroxyestrone + oxidized [NADPH--hemoprotein reductase] + H2O + H(+). It catalyses the reaction estrone + reduced [NADPH--hemoprotein reductase] + O2 = 6alpha-hydroxyestrone + oxidized [NADPH--hemoprotein reductase] + H2O + H(+). The catalysed reaction is estrone + reduced [NADPH--hemoprotein reductase] + O2 = 15alpha-hydroxyestrone + oxidized [NADPH--hemoprotein reductase] + H2O + H(+). The enzyme catalyses estrone + reduced [NADPH--hemoprotein reductase] + O2 = 16alpha-hydroxyestrone + oxidized [NADPH--hemoprotein reductase] + H2O + H(+). It carries out the reaction 17beta-estradiol + reduced [NADPH--hemoprotein reductase] + O2 = 2-hydroxy-17beta-estradiol + oxidized [NADPH--hemoprotein reductase] + H2O + H(+). It catalyses the reaction 17beta-estradiol + reduced [NADPH--hemoprotein reductase] + O2 = 4-hydroxy-17beta-estradiol + oxidized [NADPH--hemoprotein reductase] + H2O + H(+). The catalysed reaction is 17beta-estradiol + reduced [NADPH--hemoprotein reductase] + O2 = 6alpha-hydroxy-17beta-estradiol + oxidized [NADPH--hemoprotein reductase] + H2O + H(+). The enzyme catalyses 17beta-estradiol + reduced [NADPH--hemoprotein reductase] + O2 = 7alpha-hydroxy-17beta-estradiol + oxidized [NADPH--hemoprotein reductase] + H2O + H(+). It carries out the reaction 17beta-estradiol + reduced [NADPH--hemoprotein reductase] + O2 = 15alpha-hydroxy-17beta-estradiol + oxidized [NADPH--hemoprotein reductase] + H2O + H(+). It catalyses the reaction (5Z,8Z,11Z)-eicosatrienoate + reduced [NADPH--hemoprotein reductase] + O2 = 19-hydroxy-(5Z,8Z,11Z)-eicosatrienoate + oxidized [NADPH--hemoprotein reductase] + H2O + H(+). The catalysed reaction is (5Z,8Z,11Z,14Z)-eicosatetraenoate + reduced [NADPH--hemoprotein reductase] + O2 = 16-hydroxy-(5Z,8Z,11Z,14Z)-eicosatetraenoate + oxidized [NADPH--hemoprotein reductase] + H2O + H(+). The enzyme catalyses (5Z,8Z,11Z,14Z)-eicosatetraenoate + reduced [NADPH--hemoprotein reductase] + O2 = 17-hydroxy-(5Z,8Z,11Z,14Z)-eicosatetraenoate + oxidized [NADPH--hemoprotein reductase] + H2O + H(+). It carries out the reaction (5Z,8Z,11Z,14Z)-eicosatetraenoate + reduced [NADPH--hemoprotein reductase] + O2 = 18-hydroxy-(5Z,8Z,11Z,14Z)-eicosatetraenoate + oxidized [NADPH--hemoprotein reductase] + H2O + H(+). It catalyses the reaction (5Z,8Z,11Z,14Z)-eicosatetraenoate + reduced [NADPH--hemoprotein reductase] + O2 = 19-hydroxy-(5Z,8Z,11Z,14Z)-eicosatetraenoate + oxidized [NADPH--hemoprotein reductase] + H2O + H(+). The catalysed reaction is (5Z,8Z,11Z,14Z,17Z)-eicosapentaenoate + reduced [NADPH--hemoprotein reductase] + O2 = 19-hydroxy-(5Z,8Z,11Z,14Z,17Z)-eicosapentaenoate + oxidized [NADPH--hemoprotein reductase] + H2O + H(+). The enzyme catalyses (5Z,8Z,11Z,14Z)-eicosatetraenoate + reduced [NADPH--hemoprotein reductase] + O2 = (8R,9S)-epoxy-(5Z,11Z,14Z)-eicosatrienoate + oxidized [NADPH--hemoprotein reductase] + H2O + H(+). It carries out the reaction (5Z,8Z,11Z,14Z)-eicosatetraenoate + reduced [NADPH--hemoprotein reductase] + O2 = (11R,12S)-epoxy-(5Z,8Z,14Z)-eicosatrienoate + oxidized [NADPH--hemoprotein reductase] + H2O + H(+). It catalyses the reaction (5Z,8Z,11Z,14Z)-eicosatetraenoate + reduced [NADPH--hemoprotein reductase] + O2 = (14S,15R)-epoxy-(5Z,8Z,11Z)-eicosatrienoate + oxidized [NADPH--hemoprotein reductase] + H2O + H(+). The catalysed reaction is (5Z,8Z,11Z,14Z)-eicosatetraenoate + reduced [NADPH--hemoprotein reductase] + O2 = (14R,15S)-epoxy-(5Z,8Z,11Z)-eicosatrienoate + oxidized [NADPH--hemoprotein reductase] + H2O + H(+). The enzyme catalyses (5Z,8Z,11Z,14Z,17Z)-eicosapentaenoate + reduced [NADPH--hemoprotein reductase] + O2 = (17R,18S)-epoxy-(5Z,8Z,11Z,14Z)-eicosatetraenoate + oxidized [NADPH--hemoprotein reductase] + H2O + H(+). It carries out the reaction (4Z,7Z,10Z,13Z,16Z,19Z)-docosahexaenoate + reduced [NADPH--hemoprotein reductase] + O2 = (19S,20R)-epoxy-(4Z,7Z,10Z,13Z,16Z)-docosapentaenoate + oxidized [NADPH--hemoprotein reductase] + H2O + H(+). It catalyses the reaction (4Z,7Z,10Z,13Z,16Z,19Z)-docosahexaenoate + reduced [NADPH--hemoprotein reductase] + O2 = (19R,20S)-epoxy-(4Z,7Z,10Z,13Z,16Z)-docosapentaenoate + oxidized [NADPH--hemoprotein reductase] + H2O + H(+). The catalysed reaction is all-trans-retinol + reduced [NADPH--hemoprotein reductase] + O2 = all-trans-retinal + oxidized [NADPH--hemoprotein reductase] + 2 H2O + H(+). The enzyme catalyses all-trans-retinal + reduced [NADPH--hemoprotein reductase] + O2 = all-trans-retinoate + oxidized [NADPH--hemoprotein reductase] + H2O + 2 H(+). It carries out the reaction (13S)-hydroperoxy-(9Z,11E)-octadecadienoate = 13-oxo-(9Z,11E)-octadecadienoate + H2O. It catalyses the reaction (12S)-hydroperoxy-(5Z,8Z,10E,14Z)-eicosatetraenoate = 12-oxo-(5Z,8Z,10E,14Z)-eicosatetraenoate + H2O. The catalysed reaction is (15S)-hydroperoxy-(5Z,8Z,11Z,13E)-eicosatetraenoate = 15-oxo-(5Z,8Z,11Z,13E)-eicosatetraenoate + H2O. The enzyme catalyses (5S)-hydroperoxy-(6E,8Z,11Z,14Z)-eicosatetraenoate = 5-oxo-(6E,8Z,11Z,14Z)-eicosatetraenoate + H2O. Its pathway is steroid hormone biosynthesis. It participates in lipid metabolism; fatty acid metabolism. It functions in the pathway cofactor metabolism; retinol metabolism. A cytochrome P450 monooxygenase involved in the metabolism of various endogenous substrates, including fatty acids, steroid hormones and vitamins. Mechanistically, uses molecular oxygen inserting one oxygen atom into a substrate, and reducing the second into a water molecule, with two electrons provided by NADPH via cytochrome P450 reductase (CPR; NADPH-ferrihemoprotein reductase). Catalyzes the hydroxylation of carbon-hydrogen bonds. Exhibits high catalytic activity for the formation of hydroxyestrogens from estrone (E1) and 17beta-estradiol (E2), namely 2-hydroxy E1 and E2, as well as D-ring hydroxylated E1 and E2 at the C15alpha and C16alpha positions. Displays different regioselectivities for polyunsaturated fatty acids (PUFA) hydroxylation. Catalyzes the epoxidation of double bonds of certain PUFA. Converts arachidonic acid toward epoxyeicosatrienoic acid (EET) regioisomers, 8,9-, 11,12-, and 14,15-EET, that function as lipid mediators in the vascular system. Displays an absolute stereoselectivity in the epoxidation of eicosapentaenoic acid (EPA) producing the 17(R),18(S) enantiomer. May play an important role in all-trans retinoic acid biosynthesis in extrahepatic tissues. Catalyzes two successive oxidative transformation of all-trans retinol to all-trans retinal and then to the active form all-trans retinoic acid. May also participate in eicosanoids metabolism by converting hydroperoxide species into oxo metabolites (lipoxygenase-like reaction, NADPH-independent). This Cavia porcellus (Guinea pig) protein is Cytochrome P450 1A1 (CYP1A1).